A 98-amino-acid chain; its full sequence is Small ribosomal subunit protein bS20 (98 aa).

The span at Met-1 to Arg-15 shows a compositional bias: basic residues. The tract at residues Met-1–Arg-21 is disordered.

It belongs to the bacterial ribosomal protein bS20 family.

Functionally, binds directly to 16S ribosomal RNA. The polypeptide is Small ribosomal subunit protein bS20 (Chlamydia felis (strain Fe/C-56) (Chlamydophila felis)).